Reading from the N-terminus, the 135-residue chain is Hemoglobin subunit alpha (135 aa).

In terms of domain architecture, Globin spans 1 to 135 (AAVVALWGKI…VALALAERYK (135 aa)). Residue H52 coordinates O2. Position 81 (H81) interacts with heme b.

Belongs to the globin family. Hb1 is a heterotetramer of two alpha chains and two beta-1 chains. Hb2 is a heterotetramer of two alpha chains and two beta-2 chains. Post-translationally, the N-terminus is blocked. In terms of tissue distribution, red blood cells.

Involved in oxygen transport from gills to the various peripheral tissues. The sequence is that of Hemoglobin subunit alpha from Dissostichus eleginoides (Patagonian toothfish).